Here is a 960-residue protein sequence, read N- to C-terminus: Collagenase ColA (960 aa).

The signal sequence occupies residues 1-30 (MNKNLRFTQMMIGISTMALSFGSIQTQVSA). A propeptide spanning residues 31–92 (EETAPYNILQ…KRDEIQLKQS (62 aa)) is cleaved from the precursor. Residues 93–365 (YTLAELNKMP…AVEQMKTNYG (273 aa)) form an activator domain region. The S1 metalloprotease domain stretch occupies residues 93–764 (YTLAELNKMP…VFHGVATEEK (672 aa)). The segment at 375-644 (DLQKIREEGK…MQQLIDNQDK (270 aa)) is catalytic subdomain. Zn(2+) is bound at residue His-500. Glu-501 is an active-site residue. Residues His-504 and Glu-532 each coordinate Zn(2+). Residues 652–764 (NDYLIQHAPK…VFHGVATEEK (113 aa)) form a helper subdomain region. The region spanning 768–849 (TTIVNMNGPY…ESKEQTKVTV (82 aa)) is the PKD domain. Basic and acidic residues predominate over residues 836–845 (SRGKESKEQT). Residues 836-859 (SRGKESKEQTKVTVKQDPQTSESY) form a disordered region. The segment covering 846–857 (KVTVKQDPQTSE) has biased composition (polar residues). The segment at 852 to 960 (DPQTSESYEE…KNGEYSLLVK (109 aa)) is collagen-binding domain.

It belongs to the peptidase M9B family. Collagenase subfamily. Ca(2+) is required as a cofactor. Zn(2+) serves as cofactor.

Its subcellular location is the secreted. It carries out the reaction Digestion of native collagen in the triple helical region at Xaa-|-Gly bonds. With synthetic peptides, a preference is shown for Gly at P3 and P1', Pro and Ala at P2 and P2', and hydroxyproline, Ala or Arg at P3'.. Functionally, acts as a true collagenase, which is highly active and efficiently targets native tropocollagen. In vitro, can also cleave gelatin and the synthetic peptide FALGPA (furylacryloyl-Leu-Gly-Pro-Ala). May contribute to bacterial virulence in endophthalmitis or opportunistic infections via collagen degradation in the host extracellular matrix (ECM). The protein is Collagenase ColA of Bacillus cereus (strain ATCC 14579 / DSM 31 / CCUG 7414 / JCM 2152 / NBRC 15305 / NCIMB 9373 / NCTC 2599 / NRRL B-3711).